A 238-amino-acid polypeptide reads, in one-letter code: Ditrans,polycis-undecaprenyl-diphosphate synthase ((2E,6E)-farnesyl-diphosphate specific) (238 aa).

The active site involves Asp-14. Mg(2+) is bound at residue Asp-14. Substrate-binding positions include 15 to 18 (GNGR), Trp-19, Arg-27, His-31, and 59 to 61 (SSE). Asn-62 serves as the catalytic Proton acceptor. Substrate contacts are provided by residues Trp-63, Arg-65, Arg-182, and 188–190 (RIS). Residue Glu-201 coordinates Mg(2+).

This sequence belongs to the UPP synthase family. Homodimer. Mg(2+) serves as cofactor.

It catalyses the reaction 8 isopentenyl diphosphate + (2E,6E)-farnesyl diphosphate = di-trans,octa-cis-undecaprenyl diphosphate + 8 diphosphate. Functionally, catalyzes the sequential condensation of isopentenyl diphosphate (IPP) with (2E,6E)-farnesyl diphosphate (E,E-FPP) to yield (2Z,6Z,10Z,14Z,18Z,22Z,26Z,30Z,34E,38E)-undecaprenyl diphosphate (di-trans,octa-cis-UPP). UPP is the precursor of glycosyl carrier lipid in the biosynthesis of bacterial cell wall polysaccharide components such as peptidoglycan and lipopolysaccharide. This Legionella pneumophila (strain Paris) protein is Ditrans,polycis-undecaprenyl-diphosphate synthase ((2E,6E)-farnesyl-diphosphate specific).